We begin with the raw amino-acid sequence, 286 residues long: Aquaporin PIP1-1 (286 aa).

Residue Met-1 is modified to N-acetylmethionine. A disordered region spans residues 1 to 34 (MEGKEEDVRVGANKFPERQPIGTSAQSDKDYKEP). The Cytoplasmic portion of the chain corresponds to 1–54 (MEGKEEDVRVGANKFPERQPIGTSAQSDKDYKEPPPAPFFEPGELSSWSFWRAG). A helical membrane pass occupies residues 55-75 (IAEFIATFLFLYITVLTVMGV). Over 76–91 (KRSPNMCASVGIQGIA) the chain is Extracellular. Residues 92–112 (WAFGGMIFALVYCTAGISGGH) traverse the membrane as a helical segment. Topologically, residues 113–132 (INPAVTFGLFLARKLSLTRA) are cytoplasmic. The short motif at 114 to 116 (NPA) is the NPA 1 element. The helical transmembrane segment at 133 to 153 (LYYIVMQCLGAICGAGVVKGF) threads the bilayer. Residues 154 to 174 (QPKQYQALGGGANTVAHGYTK) are Extracellular-facing. Residues 175–195 (GSGLGAEIIGTFVLVYTVFSA) traverse the membrane as a helical segment. Residues 196 to 208 (TDAKRNARDSHVP) are Cytoplasmic-facing. Residues 209–229 (ILAPLPIGFAVFLVHLATIPI) traverse the membrane as a helical segment. Residues 230-256 (TGTGINPARSLGAAIIYNKDHSWDDHW) are Extracellular-facing. The short motif at 235–237 (NPA) is the NPA 2 element. A helical transmembrane segment spans residues 257–277 (VFWVGPFIGAALAALYHVVVI). Topologically, residues 278–286 (RAIPFKSRS) are cytoplasmic. The residue at position 284 (Ser-284) is a Phosphoserine.

This sequence belongs to the MIP/aquaporin (TC 1.A.8) family. PIP (TC 1.A.8.11) subfamily. Widely expressed. Expressed in roots, above ground and in flower buds.

It is found in the cell membrane. In terms of biological role, water channel required to facilitate the transport of water across cell membrane. Its function is impaired by Hg(2+). The polypeptide is Aquaporin PIP1-1 (PIP1-1) (Arabidopsis thaliana (Mouse-ear cress)).